Consider the following 462-residue polypeptide: Argininosuccinate lyase (462 aa).

The protein belongs to the lyase 1 family. Argininosuccinate lyase subfamily.

Its subcellular location is the cytoplasm. It catalyses the reaction 2-(N(omega)-L-arginino)succinate = fumarate + L-arginine. Its pathway is amino-acid biosynthesis; L-arginine biosynthesis; L-arginine from L-ornithine and carbamoyl phosphate: step 3/3. This Bacillus cereus (strain ZK / E33L) protein is Argininosuccinate lyase.